A 127-amino-acid polypeptide reads, in one-letter code: MPYRKLGRTSSQRKAMLRDLTTDLLINGRITTTEARAKEVRKTTDKMITLGKRGDLAARRQAAAFVRNEVADVIEDGDNVKVQSALQKLFDDVAPRFAERNGGYTRILKTVQRRGDAAQLVILELVD.

The protein belongs to the bacterial ribosomal protein bL17 family. In terms of assembly, part of the 50S ribosomal subunit. Contacts protein L32.

This is Large ribosomal subunit protein bL17 from Leuconostoc citreum (strain KM20).